The following is a 299-amino-acid chain: ATP phosphoribosyltransferase (299 aa).

The protein belongs to the ATP phosphoribosyltransferase family. Long subfamily. As to quaternary structure, equilibrium between an active dimeric form, an inactive hexameric form and higher aggregates. Interconversion between the various forms is largely reversible and is influenced by the natural substrates and inhibitors of the enzyme. The cofactor is Mg(2+).

It is found in the cytoplasm. The catalysed reaction is 1-(5-phospho-beta-D-ribosyl)-ATP + diphosphate = 5-phospho-alpha-D-ribose 1-diphosphate + ATP. It participates in amino-acid biosynthesis; L-histidine biosynthesis; L-histidine from 5-phospho-alpha-D-ribose 1-diphosphate: step 1/9. Feedback inhibited by histidine. In terms of biological role, catalyzes the condensation of ATP and 5-phosphoribose 1-diphosphate to form N'-(5'-phosphoribosyl)-ATP (PR-ATP). Has a crucial role in the pathway because the rate of histidine biosynthesis seems to be controlled primarily by regulation of HisG enzymatic activity. The sequence is that of ATP phosphoribosyltransferase from Salmonella enteritidis PT4 (strain P125109).